The primary structure comprises 183 residues: Ribosome rescue factor SmrB (183 aa).

Residues 98 to 173 (LDLHGLTQLQ…GDAALLVLIE (76 aa)) form the Smr domain.

It belongs to the SmrB family. In terms of assembly, associates with collided ribosomes, but not with correctly translating polysomes.

Acts as a ribosome collision sensor. Detects stalled/collided disomes (pairs of ribosomes where the leading ribosome is stalled and a second ribosome has collided with it) and endonucleolytically cleaves mRNA at the 5' boundary of the stalled ribosome. Stalled/collided disomes form a new interface (primarily via the 30S subunits) that binds SmrB. Cleaved mRNA becomes available for tmRNA ligation, leading to ribosomal subunit dissociation and rescue of stalled ribosomes. The polypeptide is Ribosome rescue factor SmrB (Escherichia coli O7:K1 (strain IAI39 / ExPEC)).